The primary structure comprises 242 residues: High mobility group protein homolog (242 aa).

DNA-binding regions (HMG box) lie at residues 54-122 (PKRN…EANK) and 126-197 (KPVK…IDKE).

The protein localises to the host nucleus. The sequence is that of High mobility group protein homolog (EF1) from Acheta domesticus (House cricket).